The sequence spans 305 residues: Ornithine carbamoyltransferase (305 aa).

Residues 54–57 (STRT), glutamine 81, arginine 105, and 132–135 (HPCQ) each bind carbamoyl phosphate. L-ornithine contacts are provided by residues asparagine 163, aspartate 223, and 227–228 (SM). Carbamoyl phosphate contacts are provided by residues 262 to 263 (CL) and arginine 290.

It belongs to the aspartate/ornithine carbamoyltransferase superfamily. OTCase family.

Its subcellular location is the cytoplasm. The catalysed reaction is carbamoyl phosphate + L-ornithine = L-citrulline + phosphate + H(+). It participates in amino-acid biosynthesis; L-arginine biosynthesis; L-arginine from L-ornithine and carbamoyl phosphate: step 1/3. In terms of biological role, reversibly catalyzes the transfer of the carbamoyl group from carbamoyl phosphate (CP) to the N(epsilon) atom of ornithine (ORN) to produce L-citrulline. The sequence is that of Ornithine carbamoyltransferase from Agrobacterium fabrum (strain C58 / ATCC 33970) (Agrobacterium tumefaciens (strain C58)).